A 218-amino-acid chain; its full sequence is Zinc metalloproteinase-disintegrin-like bothrojarin-2 (218 aa).

In terms of domain architecture, Disintegrin spans 14 to 100 (PPVCGNELLE…QCPTDDFHKN (87 aa)). Positions 16, 21, 23, 26, and 29 each coordinate Ca(2+). Cystine bridges form between C28–C46, C30–C41, C40–C63, C54–C60, C59–C85, C72–C92, C79–C111, C104–C116, C123–C173, and C151–C161. The short motif at 78–80 (ECD) is the D/ECD-tripeptide element.

It belongs to the venom metalloproteinase (M12B) family. P-III subfamily. P-IIIa sub-subfamily. As to quaternary structure, monomer. Requires Zn(2+) as cofactor. In terms of processing, glycosylated. Expressed by the venom gland.

It is found in the secreted. Functionally, the hemorrhagic metalloproteinase-disintegrin-like bothrojarin-1 is a potent inhibitor of collagen-induced platelet aggregation by blockage of alpha-2/beta-1 (ITGA2/ITGB1) integrin. It does not present any fibrinogen-clotting activity. This is Zinc metalloproteinase-disintegrin-like bothrojarin-2 from Bothrops jararaca (Jararaca).